We begin with the raw amino-acid sequence, 177 residues long: ATP synthase subunit delta (177 aa).

This sequence belongs to the ATPase delta chain family. As to quaternary structure, F-type ATPases have 2 components, F(1) - the catalytic core - and F(0) - the membrane proton channel. F(1) has five subunits: alpha(3), beta(3), gamma(1), delta(1), epsilon(1). F(0) has three main subunits: a(1), b(2) and c(10-14). The alpha and beta chains form an alternating ring which encloses part of the gamma chain. F(1) is attached to F(0) by a central stalk formed by the gamma and epsilon chains, while a peripheral stalk is formed by the delta and b chains.

The protein resides in the cell inner membrane. F(1)F(0) ATP synthase produces ATP from ADP in the presence of a proton or sodium gradient. F-type ATPases consist of two structural domains, F(1) containing the extramembraneous catalytic core and F(0) containing the membrane proton channel, linked together by a central stalk and a peripheral stalk. During catalysis, ATP synthesis in the catalytic domain of F(1) is coupled via a rotary mechanism of the central stalk subunits to proton translocation. Functionally, this protein is part of the stalk that links CF(0) to CF(1). It either transmits conformational changes from CF(0) to CF(1) or is implicated in proton conduction. The chain is ATP synthase subunit delta from Shewanella pealeana (strain ATCC 700345 / ANG-SQ1).